A 415-amino-acid polypeptide reads, in one-letter code: Squalene synthase 2 (415 aa).

Helical transmembrane passes span 281-301 and 392-412; these read AIFR…ALCY and LIVI…SNLP.

Belongs to the phytoene/squalene synthase family. It depends on Mg(2+) as a cofactor. Mn(2+) is required as a cofactor.

It is found in the endoplasmic reticulum membrane. It catalyses the reaction 2 (2E,6E)-farnesyl diphosphate + NADH + H(+) = squalene + 2 diphosphate + NAD(+). The enzyme catalyses 2 (2E,6E)-farnesyl diphosphate + NADPH + H(+) = squalene + 2 diphosphate + NADP(+). It participates in terpene metabolism; lanosterol biosynthesis; lanosterol from farnesyl diphosphate: step 1/3. In terms of biological role, component of the triterpene saponins (e.g. ginsenosides or panaxosides) and phytosterols biosynthetic pathways. Catalyzes the biosynthesis of squalene. This Panax ginseng (Korean ginseng) protein is Squalene synthase 2.